Here is a 291-residue protein sequence, read N- to C-terminus: START domain-containing protein 10 (291 aa).

Met1 carries the N-acetylmethionine modification. The disordered stretch occupies residues 1–23 (MEKPAASTEPQGSRPALGRESVQ). Residues 14-224 (RPALGRESVQ…MYKACIKYPE (211 aa)) enclose the START domain. N6-succinyllysine is present on residues Lys94, Lys197, and Lys202. Phosphoserine is present on residues Ser253, Ser259, Ser284, and Ser289. The segment at 260–291 (LENIDESAVTESREERAGGAGGEGSDDDTSLT) is disordered.

Phosphorylation at Ser-284 by CK2 negatively regulates lipid transfer activity, possibly by decreasing membrane association. As to expression, testis, kidney, liver, and intestine with the highest level in the testis.

It is found in the cell projection. Its subcellular location is the cilium. It localises to the flagellum. The protein localises to the cytoplasm. The protein resides in the membrane. Its function is as follows. Phospholipid transfer protein that preferentially selects lipid species containing a palmitoyl or stearoyl chain on the sn-1 and an unsaturated fatty acyl chain (18:1 or 18:2) on the sn-2 position. Able to transfer phosphatidylcholine (PC) and phosphatidyetanolamline (PE) between membranes. May play metabolic roles in sperm maturation or fertilization. This chain is START domain-containing protein 10 (Stard10), found in Mus musculus (Mouse).